We begin with the raw amino-acid sequence, 416 residues long: Nonsense-mediated decay protein 4 (416 aa).

Disordered stretches follow at residues 1 to 21, 195 to 218, and 356 to 393; these read MSLYPYNSDEDEARKNSNYHD, QHPIPQGESLESHNSFDETNYNNS, and DRPSKSKNKNKNKNTKKSTKPKQINGVVSDGCTGANGD. The span at 12-21 shows a compositional bias: basic and acidic residues; sequence EARKNSNYHD. Over residues 360–375 the composition is skewed to basic residues; sequence KSKNKNKNKNTKKSTK.

Its subcellular location is the cytoplasm. Involved in nonsense-mediated decay of mRNAs containing premature stop codons. The sequence is that of Nonsense-mediated decay protein 4 (NMD4) from Debaryomyces hansenii (strain ATCC 36239 / CBS 767 / BCRC 21394 / JCM 1990 / NBRC 0083 / IGC 2968) (Yeast).